Here is a 178-residue protein sequence, read N- to C-terminus: Large ribosomal subunit protein uL6 (178 aa).

It belongs to the universal ribosomal protein uL6 family. Part of the 50S ribosomal subunit.

Its function is as follows. This protein binds to the 23S rRNA, and is important in its secondary structure. It is located near the subunit interface in the base of the L7/L12 stalk, and near the tRNA binding site of the peptidyltransferase center. This is Large ribosomal subunit protein uL6 from Tropheryma whipplei (strain TW08/27) (Whipple's bacillus).